A 392-amino-acid chain; its full sequence is Extracellular metalloproteinase 4 (392 aa).

Residues 1–9 (VHSVVDYVS) constitute a propeptide that is removed on maturation. N-linked (GlcNAc...) asparagine glycosylation occurs at Asn176. Zn(2+) is bound at residue His193. Glu194 is a catalytic residue. His197 contacts Zn(2+). Asn359 and Asn385 each carry an N-linked (GlcNAc...) asparagine glycan.

Belongs to the peptidase M36 family. The cofactor is Zn(2+).

It localises to the secreted. Its function is as follows. Secreted metalloproteinase probably acting as a virulence factor. In Trichophyton soudanense, this protein is Extracellular metalloproteinase 4 (MEP4).